The chain runs to 299 residues: Homoserine kinase (299 aa).

84-94 provides a ligand contact to ATP; the sequence is PISRGLGSSSA.

It belongs to the GHMP kinase family. Homoserine kinase subfamily.

Its subcellular location is the cytoplasm. The catalysed reaction is L-homoserine + ATP = O-phospho-L-homoserine + ADP + H(+). It functions in the pathway amino-acid biosynthesis; L-threonine biosynthesis; L-threonine from L-aspartate: step 4/5. Its function is as follows. Catalyzes the ATP-dependent phosphorylation of L-homoserine to L-homoserine phosphate. The sequence is that of Homoserine kinase from Helicobacter hepaticus (strain ATCC 51449 / 3B1).